A 418-amino-acid chain; its full sequence is 6-methylpretetramide 4-monooxygenase (418 aa).

FAD contacts are provided by residues Asp-15–Arg-44 and Trp-289–Asp-299.

The protein belongs to the PheA/TfdB FAD monooxygenase family. FAD serves as cofactor.

The catalysed reaction is 6-methylpretetramide + NADPH + O2 + 2 H(+) = 4-hydroxy-6-methylpretetramide + NADP(+) + H2O. It functions in the pathway antibiotic biosynthesis; oxytetracycline biosynthesis. Functionally, involved in the biosynthesis of the tetracycline antibiotic, oxytetracycline. Catalyzes the C-4 hydroxylation of 6-methylpretetramide to yield the intermediate 4-hydroxyl-6-methylpretetramid, which is subsequently hydroxylated by OxyL to yield 4-keto-anhydrotetracycline. OxyE serves as the ancillary enzyme to assist OxyL in the hydroxylation of C-4. The chain is 6-methylpretetramide 4-monooxygenase from Streptomyces rimosus.